The chain runs to 131 residues: Fluoride-specific ion channel FluC (131 aa).

The next 4 helical transmembrane spans lie at 10–30 (AAVAIGGALGAVCRYLLSGLV), 36–56 (FPMGTVLVNVLGSFVLGFLTW), 71–91 (LATVGFCGGLTTLSTMAYETV), and 99–119 (VLSILYLTANVVLGIAAVLGG). Glycine 78 and threonine 81 together coordinate Na(+).

The protein belongs to the fluoride channel Fluc/FEX (TC 1.A.43) family.

Its subcellular location is the cell membrane. The enzyme catalyses fluoride(in) = fluoride(out). Na(+) is not transported, but it plays an essential structural role and its presence is essential for fluoride channel function. In terms of biological role, fluoride-specific ion channel. Important for reducing fluoride concentration in the cell, thus reducing its toxicity. In Methanopyrus kandleri (strain AV19 / DSM 6324 / JCM 9639 / NBRC 100938), this protein is Fluoride-specific ion channel FluC.